The primary structure comprises 600 residues: Glutamine--fructose-6-phosphate aminotransferase [isomerizing] (600 aa).

Cys2 acts as the Nucleophile; for GATase activity in catalysis. A Glutamine amidotransferase type-2 domain is found at Cys2–Lys217. SIS domains are found at residues Ile283–Lys422 and Ile452–Pro590. Lys595 acts as the For Fru-6P isomerization activity in catalysis.

In terms of assembly, homodimer.

It localises to the cytoplasm. The enzyme catalyses D-fructose 6-phosphate + L-glutamine = D-glucosamine 6-phosphate + L-glutamate. Functionally, catalyzes the first step in hexosamine metabolism, converting fructose-6P into glucosamine-6P using glutamine as a nitrogen source. The protein is Glutamine--fructose-6-phosphate aminotransferase [isomerizing] of Bacillus licheniformis (strain ATCC 14580 / DSM 13 / JCM 2505 / CCUG 7422 / NBRC 12200 / NCIMB 9375 / NCTC 10341 / NRRL NRS-1264 / Gibson 46).